The chain runs to 347 residues: NADH-ubiquinone oxidoreductase chain 2 (347 aa).

The next 10 membrane-spanning stretches (helical) occupy residues isoleucine 13 to leucine 33, alanine 55 to leucine 75, leucine 96 to proline 116, valine 122 to methionine 142, threonine 151 to asparagine 171, isoleucine 178 to proline 198, aspartate 199 to leucine 219, leucine 237 to leucine 257, glycine 274 to valine 294, and leucine 326 to isoleucine 346.

The protein belongs to the complex I subunit 2 family. As to quaternary structure, core subunit of respiratory chain NADH dehydrogenase (Complex I) which is composed of 45 different subunits. Interacts with TMEM242.

It is found in the mitochondrion inner membrane. It carries out the reaction a ubiquinone + NADH + 5 H(+)(in) = a ubiquinol + NAD(+) + 4 H(+)(out). Its function is as follows. Core subunit of the mitochondrial membrane respiratory chain NADH dehydrogenase (Complex I) which catalyzes electron transfer from NADH through the respiratory chain, using ubiquinone as an electron acceptor. Essential for the catalytic activity and assembly of complex I. The chain is NADH-ubiquinone oxidoreductase chain 2 from Pongo abelii (Sumatran orangutan).